The primary structure comprises 488 residues: 7,8-epoxymelianol synthase CYP88A51 (488 aa).

Residues 4–24 (NFLWPMLAMFLGSLVVMFGFL) traverse the membrane as a helical segment. C436 is a binding site for heme.

The protein belongs to the cytochrome P450 family. The cofactor is heme. As to expression, accumulates in mature fruits and in juice vesicles.

It is found in the membrane. The enzyme catalyses melianol + reduced [NADPH--hemoprotein reductase] + O2 = 7,8-epoxymelianol + oxidized [NADPH--hemoprotein reductase] + H2O + H(+). It functions in the pathway secondary metabolite biosynthesis; terpenoid biosynthesis. Functionally, monooxygenase involved in the biosynthesis of limonoids triterpene natural products such as limonin, a compound with insecticidal activity responsible for the bitter taste in citrus. Catalyzes the epoxidation of melianol to produce 7,8-epoxymelianol. The sequence is that of 7,8-epoxymelianol synthase CYP88A51 from Citrus sinensis (Sweet orange).